Here is a 292-residue protein sequence, read N- to C-terminus: Non-homologous end joining protein Ku (292 aa).

The Ku domain maps to 9 to 187 (ITFGLVNVPV…TVPPITEREL (179 aa)). The segment covering 264–285 (AASAFPAAEKAPAGKNAATASA) has biased composition (low complexity). A disordered region spans residues 264 to 292 (AASAFPAAEKAPAGKNAATASAKKARKLA).

Belongs to the prokaryotic Ku family. In terms of assembly, homodimer. Interacts with LigD.

With LigD forms a non-homologous end joining (NHEJ) DNA repair enzyme, which repairs dsDNA breaks with reduced fidelity. Binds linear dsDNA with 5'- and 3'- overhangs but not closed circular dsDNA nor ssDNA. Recruits and stimulates the ligase activity of LigD. In Leifsonia xyli subsp. xyli (strain CTCB07), this protein is Non-homologous end joining protein Ku.